Consider the following 397-residue polypeptide: Acetate kinase (397 aa).

Mg(2+) is bound at residue asparagine 7. Lysine 14 lines the ATP pocket. Substrate is bound at residue arginine 91. Aspartate 148 acts as the Proton donor/acceptor in catalysis. ATP-binding positions include 208–212, 283–285, and 331–335; these read HLGNG, DFR, and GLGEN. Mg(2+) is bound at residue glutamate 383.

This sequence belongs to the acetokinase family. As to quaternary structure, homodimer. Mg(2+) serves as cofactor. The cofactor is Mn(2+).

It localises to the cytoplasm. The catalysed reaction is acetate + ATP = acetyl phosphate + ADP. It functions in the pathway metabolic intermediate biosynthesis; acetyl-CoA biosynthesis; acetyl-CoA from acetate: step 1/2. In terms of biological role, catalyzes the formation of acetyl phosphate from acetate and ATP. Can also catalyze the reverse reaction. In Heliobacterium modesticaldum (strain ATCC 51547 / Ice1), this protein is Acetate kinase.